Consider the following 579-residue polypeptide: A-type ATP synthase subunit A (579 aa).

An ATP-binding site is contributed by 229–236; it reads GPFGSGKT.

Belongs to the ATPase alpha/beta chains family. Has multiple subunits with at least A(3), B(3), C, D, E, F, H, I and proteolipid K(x).

The protein resides in the cell membrane. It catalyses the reaction ATP + H2O + 4 H(+)(in) = ADP + phosphate + 5 H(+)(out). Functionally, component of the A-type ATP synthase that produces ATP from ADP in the presence of a proton gradient across the membrane. The A chain is the catalytic subunit. The protein is A-type ATP synthase subunit A of Methanocella arvoryzae (strain DSM 22066 / NBRC 105507 / MRE50).